The following is a 476-amino-acid chain: E3 SUMO-protein ligase EGR2 (476 aa).

The segment covering 127-141 has biased composition (low complexity); it reads PASTTASSSVTSASP. Positions 127 to 178 are disordered; it reads PASTTASSSVTSASPNPLATGPLGVCTMSQTQPDLDHLYSPPPPPPPYSGCA. Positions 162–165 match the HCFC1-binding-motif (HBM) motif; it reads DHLY. Residue lysine 247 is modified to N6-acetyllysine; by EP300. Disordered regions lie at residues 275–300 and 318–341; these read GPSA…SSSA and RPIL…RPYP. Positions 281-290 are enriched in gly residues; sequence TGPGASGGSE. C2H2-type zinc fingers lie at residues 340-364, 370-392, and 398-420; these read YPCP…IRIH, FQCR…IRTH, and FACD…TKIH. Positions 412–476 are disordered; sequence ERKRHTKIHL…APCSSRTRTP (65 aa). A compositionally biased stretch (basic residues) spans 415–425; sequence RHTKIHLRQKE. Positions 429–476 are enriched in low complexity; that stretch reads SAPSASVPAPSTASCSGGVQPGGTLCSSNSSSLGGGPLAPCSSRTRTP.

Belongs to the EGR C2H2-type zinc-finger protein family. As to quaternary structure, interacts with HCFC1. Interacts with WWP2. Interacts with UBC9. Interacts with CITED1. Interacts (via phosphorylated form) with SFN. In terms of processing, ubiquitinated by WWP2 leading to proteasomal degradation. Post-translationally, acetylated at Lys-247. May be deacetylated by HDAC6, HDAC10 or SIRT1.

Its subcellular location is the nucleus. The protein operates within protein modification; protein sumoylation. Functionally, sequence-specific DNA-binding transcription factor. Plays a role in hindbrain segmentation by regulating the expression of a subset of homeobox containing genes and in Schwann cell myelination by regulating the expression of genes involved in the formation and maintenance of myelin. Binds to two EGR2-consensus sites EGR2A (5'-CTGTAGGAG-3') and EGR2B (5'-ATGTAGGTG-3') in the HOXB3 enhancer and promotes HOXB3 transcriptional activation. Binds to specific DNA sites located in the promoter region of HOXA4, HOXB2 and ERBB2. Regulates hindbrain segmentation by controlling the expression of Hox genes, such as HOXA4, HOXB3 and HOXB2, and thereby specifying odd and even rhombomeres. Promotes the expression of HOXB3 in the rhombomere r5 in the hindbrain. Regulates myelination in the peripheral nervous system after birth, possibly by regulating the expression of myelin proteins, such as MPZ, and by promoting the differentiation of Schwann cells. Involved in the development of the jaw openener musculature, probably by playing a role in its innervation through trigeminal motor neurons. May play a role in adipogenesis, possibly by regulating the expression of CEBPB. E3 SUMO-protein ligase helping SUMO1 conjugation to its coregulators NAB1 and NAB2, whose sumoylation down-regulates EGR2 transcriptional activity. The polypeptide is E3 SUMO-protein ligase EGR2 (EGR2) (Homo sapiens (Human)).